Here is a 220-residue protein sequence, read N- to C-terminus: Ribosomal RNA large subunit methyltransferase E (220 aa).

Residues Gly-60, Trp-62, Asp-92, Asp-108, and Asp-133 each coordinate S-adenosyl-L-methionine. The active-site Proton acceptor is the Lys-173.

Belongs to the class I-like SAM-binding methyltransferase superfamily. RNA methyltransferase RlmE family.

Its subcellular location is the cytoplasm. It catalyses the reaction uridine(2552) in 23S rRNA + S-adenosyl-L-methionine = 2'-O-methyluridine(2552) in 23S rRNA + S-adenosyl-L-homocysteine + H(+). Specifically methylates the uridine in position 2552 of 23S rRNA at the 2'-O position of the ribose in the fully assembled 50S ribosomal subunit. The chain is Ribosomal RNA large subunit methyltransferase E from Burkholderia multivorans (strain ATCC 17616 / 249).